A 129-amino-acid chain; its full sequence is Small ribosomal subunit protein uS11 (129 aa).

The protein belongs to the universal ribosomal protein uS11 family. As to quaternary structure, part of the 30S ribosomal subunit. Interacts with proteins S7 and S18. Binds to IF-3.

In terms of biological role, located on the platform of the 30S subunit, it bridges several disparate RNA helices of the 16S rRNA. Forms part of the Shine-Dalgarno cleft in the 70S ribosome. This Photobacterium profundum (strain SS9) protein is Small ribosomal subunit protein uS11.